The sequence spans 97 residues: Large ribosomal subunit protein bL36m (97 aa).

Belongs to the bacterial ribosomal protein bL36 family. In terms of assembly, component of the mitochondrial ribosome large subunit (39S) which comprises a 16S rRNA and about 50 distinct proteins.

Its subcellular location is the mitochondrion. The polypeptide is Large ribosomal subunit protein bL36m (Mrpl36) (Rattus norvegicus (Rat)).